The following is a 967-amino-acid chain: Phosphoenolpyruvate carboxylase (967 aa).

Ser10 is subject to Phosphoserine. Catalysis depends on residues His171 and Lys601. Positions 915-936 are disordered; the sequence is NASRLPLSRESPEATKPADELV. The segment covering 924–933 has biased composition (basic and acidic residues); the sequence is ESPEATKPAD.

This sequence belongs to the PEPCase type 1 family. In terms of assembly, homotetramer. Mg(2+) is required as a cofactor.

It localises to the cytoplasm. The catalysed reaction is oxaloacetate + phosphate = phosphoenolpyruvate + hydrogencarbonate. Its activity is regulated as follows. By light-reversible phosphorylation. Functionally, through the carboxylation of phosphoenolpyruvate (PEP) it forms oxaloacetate, a four-carbon dicarboxylic acid source for the tricarboxylic acid cycle. This is Phosphoenolpyruvate carboxylase from Pisum sativum (Garden pea).